The primary structure comprises 355 residues: Putative inositol monophosphatase 3 (355 aa).

A helical transmembrane segment spans residues 16–36 (LPATIVAILLTFVLVYFLNFH). Mg(2+) is bound by residues Glu-127, Asp-167, Leu-169, Asp-170, and Asp-292. Glu-127 is a binding site for substrate. Substrate-binding positions include 169–172 (LDAT) and Asp-292.

It belongs to the inositol monophosphatase superfamily. It depends on Mg(2+) as a cofactor.

The protein localises to the membrane. It carries out the reaction a myo-inositol phosphate + H2O = myo-inositol + phosphate. The protein operates within polyol metabolism; myo-inositol biosynthesis; myo-inositol from D-glucose 6-phosphate: step 2/2. This is Putative inositol monophosphatase 3 from Drosophila melanogaster (Fruit fly).